The chain runs to 271 residues: Tryptophan synthase alpha chain (271 aa).

Residues Glu49 and Asp60 each act as proton acceptor in the active site.

The protein belongs to the TrpA family. In terms of assembly, tetramer of two alpha and two beta chains.

The enzyme catalyses (1S,2R)-1-C-(indol-3-yl)glycerol 3-phosphate + L-serine = D-glyceraldehyde 3-phosphate + L-tryptophan + H2O. Its pathway is amino-acid biosynthesis; L-tryptophan biosynthesis; L-tryptophan from chorismate: step 5/5. Its function is as follows. The alpha subunit is responsible for the aldol cleavage of indoleglycerol phosphate to indole and glyceraldehyde 3-phosphate. This chain is Tryptophan synthase alpha chain, found in Buchnera aphidicola subsp. Schizaphis graminum (strain Sg).